We begin with the raw amino-acid sequence, 508 residues long: MGSDSNNLGFLKEIGLGATNIGSFINGQWKANGPTVHSVNPSTNQVIASVTEATLDDYEEGLRASSEAAKTWRTVPAPKRGEIVRQIGDALRAKLDPLGRLVALEMGKILAEGIGEVQEIIDMCDYSVGLSRQLNGSIIPSERPEHMMFEVWNPLGIVGVITAFNFPCAVLGWNACIALVGGNTVVWKGAPTTPLITVAVTKLIAEVFERNNLPGAIFTALCGGADIGHAIAKDTRIPLVSFTGSSKVGALVQQTVSQRFGKTLLELSGNNAIIVMDDADITLAVRSIFFAAVGTAGQRCTTCRRLYLHESVYANVLEQLTALYKQVKIGNPLEEGTLVGPLHTRSAVENFKNGISAIKSQGGKIVTGGSVLESEGNFVVPTIVEISADAAVVKEELFAPVLYVMKFKDLEEAIALNNSVPQGLSSSIFTQKPSTIFKWIGPSGSDCGIVNVNIPTNGAEIGGAFGGEKATGGGREAGSDSWKQYMRRSTCTINYGSELPLAQGINFG.

An NAD(+)-binding site is contributed by 244–249 (GSSKVG). E266 acts as the Proton acceptor in catalysis. C300 (nucleophile) is an active-site residue.

This sequence belongs to the aldehyde dehydrogenase family. Homotetramer.

It catalyses the reaction an aldehyde + NAD(+) + H2O = a carboxylate + NADH + 2 H(+). This Pisum sativum (Garden pea) protein is Aldehyde dehydrogenase family 7 member A1.